The sequence spans 451 residues: Methionine aminopeptidase 2-2 (451 aa).

The interval 1–101 (MAAKVADDVA…IDEVFPNDSY (101 aa)) is disordered. The segment covering 37 to 51 (EHEDSDDDNEAEEGA) has biased composition (acidic residues). Residues 60–73 (KKKKKRKPRKKKKA) are compositionally biased toward basic residues. Position 204 (H204) interacts with substrate. A divalent metal cation-binding residues include D224, D235, and H304. H312 is a binding site for substrate. Residues E337 and E432 each contribute to the a divalent metal cation site.

This sequence belongs to the peptidase M24A family. Methionine aminopeptidase eukaryotic type 2 subfamily. Co(2+) serves as cofactor. It depends on Zn(2+) as a cofactor. Mn(2+) is required as a cofactor. The cofactor is Fe(2+).

The protein localises to the cytoplasm. It catalyses the reaction Release of N-terminal amino acids, preferentially methionine, from peptides and arylamides.. Functionally, cotranslationally removes the N-terminal methionine from nascent proteins. The N-terminal methionine is often cleaved when the second residue in the primary sequence is small and uncharged (Met-Ala-, Cys, Gly, Pro, Ser, Thr, or Val). The protein is Methionine aminopeptidase 2-2 of Pyrenophora tritici-repentis (strain Pt-1C-BFP) (Wheat tan spot fungus).